Consider the following 1445-residue polypeptide: 3'-5' RNA helicase YTHDC2 (1445 aa).

Residues 1–50 (MSRPSSVSPRPPAPSGGGTGGGGGGSGGGGGGGGGGPASCGPGGGGRAKG) form a disordered region. A compositionally biased stretch (gly residues) spans 15–48 (SGGGTGGGGGGSGGGGGGGGGGPASCGPGGGGRA). An R3H domain is found at 53-121 (DIRIDEEVKI…NRYLTVKKKD (69 aa)). A Helicase ATP-binding domain is found at 218–384 (VKIIKENKVV…FGSCPVIYIQ (167 aa)). 231-238 (GETGSGKT) is a binding site for ATP. The DEAH box motif lies at 331-334 (DEVH). 2 ANK repeats span residues 521 to 553 (TSAT…SKAS) and 554 to 586 (NGWM…FGNL). Residues 627–799 (LLYNICHSCD…ELCLHTKLLA (173 aa)) form the Helicase C-terminal domain. S1104, S1105, and S1107 each carry phosphoserine. The segment covering 1179–1189 (EQSAGLQQPSG) has biased composition (polar residues). Positions 1179 to 1303 (EQSAGLQQPS…SPSPRPNMPI (125 aa)) are disordered. The segment covering 1246-1264 (KYKDRGILHPKRSTDDRSD) has biased composition (basic and acidic residues). The span at 1265–1279 (QSSVKSTDSSSYPSP) shows a compositional bias: low complexity. S1278, S1282, and S1296 each carry phosphoserine. In terms of domain architecture, YTH spans 1303–1433 (IRYFIMKSSN…QVGEQLLQLW (131 aa)). Residues 1309-1311 (KSS), W1325, and W1375 each bind RNA.

This sequence belongs to the DEAD box helicase family. DEAH subfamily. Interacts with MEIOC; binds transcripts that regulate the mitotic cell cycle inhibiting progression into metaphase, thereby allowing meiotic prophase to proceed normally. Interacts (via ANK repeats) with XRN1. Interacts with ZCCHC4. Associates with the small ribosomal subunit. Interacts with RBM46. As to expression, present in male and female germ cells (at protein level). Highly expressed in testis. Not detected in spermatogonia next to the tubule wall but is strongly expressed in spermatocytes, suggesting that it is up-regulated in germ cells upon entry into meiosis (at protein level).

The protein resides in the cytoplasm. It localises to the perinuclear region. The catalysed reaction is ATP + H2O = ADP + phosphate + H(+). Its function is as follows. 3'-5' RNA helicase that plays a key role in the male and female germline by promoting transition from mitotic to meiotic divisions in stem cells. Specifically recognizes and binds N6-methyladenosine (m6A)-containing RNAs, a modification present at internal sites of mRNAs and some non-coding RNAs that plays a role in the efficiency of RNA processing and stability. Essential for ensuring a successful progression of the meiotic program in the germline by regulating the level of m6A-containing RNAs. Acts by binding and promoting degradation of m6A-containing mRNAs: the 3'-5' RNA helicase activity is required for this process and RNA degradation may be mediated by XRN1 exoribonuclease. Required for both spermatogenesis and oogenesis. This Mus musculus (Mouse) protein is 3'-5' RNA helicase YTHDC2.